Reading from the N-terminus, the 207-residue chain is N-(5'-phosphoribosyl)anthranilate isomerase (207 aa).

This sequence belongs to the TrpF family.

It catalyses the reaction N-(5-phospho-beta-D-ribosyl)anthranilate = 1-(2-carboxyphenylamino)-1-deoxy-D-ribulose 5-phosphate. It functions in the pathway amino-acid biosynthesis; L-tryptophan biosynthesis; L-tryptophan from chorismate: step 3/5. In Geotalea daltonii (strain DSM 22248 / JCM 15807 / FRC-32) (Geobacter daltonii), this protein is N-(5'-phosphoribosyl)anthranilate isomerase.